A 308-amino-acid polypeptide reads, in one-letter code: Sulfate adenylyltransferase subunit 2 (308 aa).

Residues 286–308 (RQGRIIDHDGSASMEKKKQEGYF) form a disordered region.

Belongs to the PAPS reductase family. CysD subfamily. As to quaternary structure, heterodimer composed of CysD, the smaller subunit, and CysN.

The enzyme catalyses sulfate + ATP + H(+) = adenosine 5'-phosphosulfate + diphosphate. It functions in the pathway sulfur metabolism; hydrogen sulfide biosynthesis; sulfite from sulfate: step 1/3. Its function is as follows. With CysN forms the ATP sulfurylase (ATPS) that catalyzes the adenylation of sulfate producing adenosine 5'-phosphosulfate (APS) and diphosphate, the first enzymatic step in sulfur assimilation pathway. APS synthesis involves the formation of a high-energy phosphoric-sulfuric acid anhydride bond driven by GTP hydrolysis by CysN coupled to ATP hydrolysis by CysD. This chain is Sulfate adenylyltransferase subunit 2, found in Nocardia farcinica (strain IFM 10152).